Here is a 500-residue protein sequence, read N- to C-terminus: Glycerol kinase (500 aa).

Thr-13 lines the ADP pocket. ATP-binding residues include Thr-13, Thr-14, and Ser-15. Thr-13 provides a ligand contact to sn-glycerol 3-phosphate. Residue Arg-17 coordinates ADP. The sn-glycerol 3-phosphate site is built by Arg-83, Glu-84, Tyr-135, and Asp-244. Glycerol-binding residues include Arg-83, Glu-84, Tyr-135, Asp-244, and Gln-245. Thr-266 and Gly-309 together coordinate ADP. Residues Thr-266, Gly-309, Gln-313, and Gly-410 each contribute to the ATP site. ADP contacts are provided by Gly-410 and Asn-414.

The protein belongs to the FGGY kinase family.

It catalyses the reaction glycerol + ATP = sn-glycerol 3-phosphate + ADP + H(+). Its pathway is polyol metabolism; glycerol degradation via glycerol kinase pathway; sn-glycerol 3-phosphate from glycerol: step 1/1. Its activity is regulated as follows. Inhibited by fructose 1,6-bisphosphate (FBP). Key enzyme in the regulation of glycerol uptake and metabolism. Catalyzes the phosphorylation of glycerol to yield sn-glycerol 3-phosphate. The sequence is that of Glycerol kinase from Burkholderia ambifaria (strain MC40-6).